We begin with the raw amino-acid sequence, 496 residues long: Genome polyprotein (496 aa).

The Extracellular segment spans residues 1–447 (SRCTHLENRD…HTVLGGAFNS (447 aa)). 6 cysteine pairs are disulfide-bonded: cysteine 3/cysteine 30, cysteine 60/cysteine 116, cysteine 60/cysteine 121, cysteine 74/cysteine 105, cysteine 92/cysteine 116, and cysteine 92/cysteine 121. Residues 98–111 (DRGWGNHCGLFGKG) form a fusion peptide region. The N-linked (GlcNAc...) asparagine; by host glycan is linked to asparagine 154. 2 disulfides stabilise this stretch: cysteine 186-cysteine 290 and cysteine 307-cysteine 338. The chain crosses the membrane as a helical span at residues 448-468 (IFGGVGFLPKLLMGVALAWLG). The Cytoplasmic portion of the chain corresponds to 469 to 479 (LNTRNPTMSMS). The helical transmembrane segment at 480–496 (FLLAGGLVLAMTLGVGA) threads the bilayer.

Homodimer; in the endoplasmic reticulum and Golgi. Post-translationally, N-glycosylated.

It localises to the virion membrane. It is found in the host endoplasmic reticulum membrane. In terms of biological role, binds to host cell surface receptor and mediates fusion between viral and cellular membranes. Envelope protein is synthesized in the endoplasmic reticulum in the form of heterodimer with protein prM. They play a role in virion budding in the ER, and the newly formed immature particle is covered with 60 spikes composed of heterodimer between precursor prM and envelope protein E. The virion is transported to the Golgi apparatus where the low pH causes dissociation of PrM-E heterodimers and formation of E homodimers. prM-E cleavage is ineficient, and many virions are only partially matured. These uncleaved prM would play a role in immune evasion. The sequence is that of Genome polyprotein from Louping ill virus (strain Negishi 3248/49/P10) (Li).